The sequence spans 286 residues: MKTIPDALFGLIGFPVSHSVSPAMQNAAFKHCKLDYLYLTIAAKPEELQNVIASMGPLNIRGLNVTIPHKIEVIKYIDSLDPAAEKIGAVNTIVNENGRLKGYNTDFGGFVRLLEHNRIAPAKQRFTLLGAGGSAHAIALAVCNLGGHLTVLARQEEKAKDLAGKMCLRLSGKTQGLELNDTNLEEALADTDVIVNCTPVGMGNLAGQSLVPPRLLRPDLTVIDAIYNPCKTRLLEDAEKRGARIINGLEMLVWQGAMSFEIWTNQKAPFRLMMKEAELALDENKK.

Shikimate contacts are provided by residues 19–21 (SVS) and Thr-66. Residue Lys-70 is the Proton acceptor of the active site. Residues Asn-91 and Asp-106 each contribute to the shikimate site. Residues 130-134 (GAGGS) and Ala-225 contribute to the NADP(+) site. Tyr-227 lines the shikimate pocket. Gly-248 contacts NADP(+).

It belongs to the shikimate dehydrogenase family. As to quaternary structure, homodimer.

The catalysed reaction is shikimate + NADP(+) = 3-dehydroshikimate + NADPH + H(+). It functions in the pathway metabolic intermediate biosynthesis; chorismate biosynthesis; chorismate from D-erythrose 4-phosphate and phosphoenolpyruvate: step 4/7. In terms of biological role, involved in the biosynthesis of the chorismate, which leads to the biosynthesis of aromatic amino acids. Catalyzes the reversible NADPH linked reduction of 3-dehydroshikimate (DHSA) to yield shikimate (SA). The chain is Shikimate dehydrogenase (NADP(+)) from Dehalococcoides mccartyi (strain ATCC BAA-2266 / KCTC 15142 / 195) (Dehalococcoides ethenogenes (strain 195)).